Consider the following 465-residue polypeptide: Putative adhesin P1-like protein MPN_286 (465 aa).

Disordered stretches follow at residues 9–48 (GNGH…STFS), 59–78 (QGTL…PKWP), and 93–167 (WRND…LPPN). Residues 21–37 (SNSSTSGVTTQGQQSQN) show a composition bias toward low complexity. The segment covering 38–48 (ASGTEPASTFS) has biased composition (polar residues). Residues 111 to 131 (TSATGSGQQGSSSGTTNSAGN) show a composition bias toward low complexity. Over residues 135–144 (LKQDKVDKSG) the composition is skewed to basic and acidic residues. Polar residues predominate over residues 145-156 (DSVTVAETTSGD). The segment covering 157–167 (NLTNYTNLPPN) has biased composition (low complexity).

Belongs to the adhesin P1 family.

The polypeptide is Putative adhesin P1-like protein MPN_286 (Mycoplasma pneumoniae (strain ATCC 29342 / M129 / Subtype 1) (Mycoplasmoides pneumoniae)).